We begin with the raw amino-acid sequence, 481 residues long: Cys-Gly metallodipeptidase DUG1 (481 aa).

A Zn(2+)-binding site is contributed by His-102. The active site involves Asp-104. Residue Asp-137 coordinates Zn(2+). The active-site Proton acceptor is the Glu-171. The Zn(2+) site is built by Glu-172, Asp-200, and His-450. Ser-451 is subject to Phosphoserine.

It belongs to the peptidase M20A family. As to quaternary structure, homodimer. Component of the GSH degradosomal complex composed of at least DUG1, DUG2 and DUG3. The cofactor is Zn(2+). Requires Mn(2+) as cofactor.

It localises to the cytoplasm. It is found in the mitochondrion. Functionally, catalytic component of the GSH degradosomal complex involved in the degradation of glutathione (GSH) and other peptides containing a gamma-glu-X bond. Also functions in a DUG2-DUG3-independent manner as a dipeptidase with high specificity for Cys-Gly and no activity toward tri- or tetrapeptides. The protein is Cys-Gly metallodipeptidase DUG1 (DUG1) of Saccharomyces cerevisiae (strain ATCC 204508 / S288c) (Baker's yeast).